A 311-amino-acid polypeptide reads, in one-letter code: Ribosomal RNA small subunit methyltransferase H (311 aa).

Residues 32 to 34, Asp52, Phe78, Asp99, and Gln106 contribute to the S-adenosyl-L-methionine site; that span reads GGH.

This sequence belongs to the methyltransferase superfamily. RsmH family.

It localises to the cytoplasm. It carries out the reaction cytidine(1402) in 16S rRNA + S-adenosyl-L-methionine = N(4)-methylcytidine(1402) in 16S rRNA + S-adenosyl-L-homocysteine + H(+). In terms of biological role, specifically methylates the N4 position of cytidine in position 1402 (C1402) of 16S rRNA. In Halothermothrix orenii (strain H 168 / OCM 544 / DSM 9562), this protein is Ribosomal RNA small subunit methyltransferase H.